A 381-amino-acid polypeptide reads, in one-letter code: ELMO domain-containing protein 3 (381 aa).

In terms of domain architecture, ELMO spans 170 to 324; that stretch reads THGRVLQTIY…DLEALAKKSP (155 aa).

In terms of tissue distribution, both isoform 1 and isoform 2 are widely expressed.

It localises to the cell projection. It is found in the stereocilium. The protein resides in the kinocilium. The protein localises to the cytoplasm. Its subcellular location is the cytoskeleton. In terms of biological role, acts as a GTPase-activating protein (GAP) for ARL2 with low specific activity. This Mus musculus (Mouse) protein is ELMO domain-containing protein 3 (Elmod3).